The primary structure comprises 806 residues: Acetyl-CoA decarbonylase/synthase complex subunit alpha 1 (806 aa).

C73, C76, C77, C79, C84, and C94 together coordinate [4Fe-4S] cluster. H117 is a binding site for CO. H250, C278, and C323 together coordinate [Ni-4Fe-4S] cluster. 2 4Fe-4S ferredoxin-type domains span residues 407-436 and 445-475; these read DEQMKEWVDKCADCGSCYLVCPEELEIPEA and YSYLVDLHDQCIGCRRCEQVCKKEIPILSVI. Positions 417, 420, 423, 427, 455, 458, 461, and 465 each coordinate [4Fe-4S] cluster. Residues C523, C552, and C587 each coordinate [Ni-4Fe-4S] cluster.

Belongs to the Ni-containing carbon monoxide dehydrogenase family. As to quaternary structure, heterotetramer of two alpha and two epsilon subunits. The ACDS complex is made up of alpha, epsilon, beta, gamma and delta subunits with a probable stoichiometry of (alpha(2)epsilon(2))(4)-beta(8)-(gamma(1)delta(1))(8). Requires [4Fe-4S] cluster as cofactor. It depends on [Ni-4Fe-4S] cluster as a cofactor.

It catalyses the reaction CO + 2 oxidized [2Fe-2S]-[ferredoxin] + H2O = 2 reduced [2Fe-2S]-[ferredoxin] + CO2 + 2 H(+). The protein operates within one-carbon metabolism; methanogenesis from acetate. Its function is as follows. Part of the ACDS complex that catalyzes the reversible cleavage of acetyl-CoA, allowing growth on acetate as sole source of carbon and energy. The alpha-epsilon subcomponent functions as a carbon monoxide dehydrogenase. This Methanosarcina thermophila protein is Acetyl-CoA decarbonylase/synthase complex subunit alpha 1.